Here is a 467-residue protein sequence, read N- to C-terminus: Asparagine--tRNA ligase (467 aa).

The protein belongs to the class-II aminoacyl-tRNA synthetase family. Homodimer.

It is found in the cytoplasm. The enzyme catalyses tRNA(Asn) + L-asparagine + ATP = L-asparaginyl-tRNA(Asn) + AMP + diphosphate + H(+). In Histophilus somni (strain 2336) (Haemophilus somnus), this protein is Asparagine--tRNA ligase.